Reading from the N-terminus, the 1011-residue chain is Protein translocase subunit SecA (1011 aa).

Residues Q87, 105–109, and D500 contribute to the ATP site; that span reads GEGKT. Residues 969 to 1011 form a disordered region; the sequence is SLPLGANPAPARPQPAVMQEQECPCGSGKPFNKCHGGEDEATA. Zn(2+)-binding residues include C991, C993, C1002, and H1003.

It belongs to the SecA family. In terms of assembly, monomer and homodimer. Part of the essential Sec protein translocation apparatus which comprises SecA, SecYEG and auxiliary proteins SecDF-YajC and YidC. Requires Zn(2+) as cofactor.

It is found in the cell inner membrane. Its subcellular location is the cytoplasm. It catalyses the reaction ATP + H2O + cellular proteinSide 1 = ADP + phosphate + cellular proteinSide 2.. Its function is as follows. Part of the Sec protein translocase complex. Interacts with the SecYEG preprotein conducting channel. Has a central role in coupling the hydrolysis of ATP to the transfer of proteins into and across the cell membrane, serving as an ATP-driven molecular motor driving the stepwise translocation of polypeptide chains across the membrane. The chain is Protein translocase subunit SecA from Sorangium cellulosum (strain So ce56) (Polyangium cellulosum (strain So ce56)).